A 367-amino-acid chain; its full sequence is Ferrochelatase (367 aa).

The Fe cation site is built by H226 and E307.

Belongs to the ferrochelatase family.

It is found in the cytoplasm. It catalyses the reaction heme b + 2 H(+) = protoporphyrin IX + Fe(2+). It participates in porphyrin-containing compound metabolism; protoheme biosynthesis; protoheme from protoporphyrin-IX: step 1/1. Catalyzes the ferrous insertion into protoporphyrin IX. The protein is Ferrochelatase of Burkholderia pseudomallei (strain 668).